The primary structure comprises 139 residues: Translation initiation factor 2 subunit beta (139 aa).

It belongs to the eIF-2-beta/eIF-5 family. As to quaternary structure, heterotrimer composed of an alpha, a beta and a gamma chain.

Functionally, eIF-2 functions in the early steps of protein synthesis by forming a ternary complex with GTP and initiator tRNA. This Saccharolobus solfataricus (strain ATCC 35092 / DSM 1617 / JCM 11322 / P2) (Sulfolobus solfataricus) protein is Translation initiation factor 2 subunit beta.